The sequence spans 233 residues: 5'-methylthioadenosine/S-adenosylhomocysteine nucleosidase (233 aa).

The Proton acceptor role is filled by Glu12. Residues Gly78, Ile152, and 173-174 (ME) contribute to the substrate site. Asp197 serves as the catalytic Proton donor.

This sequence belongs to the PNP/UDP phosphorylase family. MtnN subfamily. Homodimer.

It carries out the reaction S-adenosyl-L-homocysteine + H2O = S-(5-deoxy-D-ribos-5-yl)-L-homocysteine + adenine. The catalysed reaction is S-methyl-5'-thioadenosine + H2O = 5-(methylsulfanyl)-D-ribose + adenine. It catalyses the reaction 5'-deoxyadenosine + H2O = 5-deoxy-D-ribose + adenine. It participates in amino-acid biosynthesis; L-methionine biosynthesis via salvage pathway; S-methyl-5-thio-alpha-D-ribose 1-phosphate from S-methyl-5'-thioadenosine (hydrolase route): step 1/2. In terms of biological role, catalyzes the irreversible cleavage of the glycosidic bond in both 5'-methylthioadenosine (MTA) and S-adenosylhomocysteine (SAH/AdoHcy) to adenine and the corresponding thioribose, 5'-methylthioribose and S-ribosylhomocysteine, respectively. Also cleaves 5'-deoxyadenosine, a toxic by-product of radical S-adenosylmethionine (SAM) enzymes, into 5-deoxyribose and adenine. Thus, is required for in vivo function of the radical SAM enzymes biotin synthase and lipoic acid synthase, that are inhibited by 5'-deoxyadenosine accumulation. This chain is 5'-methylthioadenosine/S-adenosylhomocysteine nucleosidase, found in Yersinia enterocolitica serotype O:8 / biotype 1B (strain NCTC 13174 / 8081).